The sequence spans 157 residues: 2-C-methyl-D-erythritol 2,4-cyclodiphosphate synthase (157 aa).

The a divalent metal cation site is built by Asp-8 and His-10. Residues 8-10 (DVH) and 34-35 (HS) each bind 4-CDP-2-C-methyl-D-erythritol 2-phosphate. His-42 provides a ligand contact to a divalent metal cation. 4-CDP-2-C-methyl-D-erythritol 2-phosphate is bound by residues 56-58 (DIG), 61-65 (FPDTD), 100-106 (AQAPKMA), 132-135 (TTEE), Phe-139, and Arg-142.

The protein belongs to the IspF family. In terms of assembly, homotrimer. It depends on a divalent metal cation as a cofactor.

It catalyses the reaction 4-CDP-2-C-methyl-D-erythritol 2-phosphate = 2-C-methyl-D-erythritol 2,4-cyclic diphosphate + CMP. It participates in isoprenoid biosynthesis; isopentenyl diphosphate biosynthesis via DXP pathway; isopentenyl diphosphate from 1-deoxy-D-xylulose 5-phosphate: step 4/6. Its function is as follows. Involved in the biosynthesis of isopentenyl diphosphate (IPP) and dimethylallyl diphosphate (DMAPP), two major building blocks of isoprenoid compounds. Catalyzes the conversion of 4-diphosphocytidyl-2-C-methyl-D-erythritol 2-phosphate (CDP-ME2P) to 2-C-methyl-D-erythritol 2,4-cyclodiphosphate (ME-CPP) with a corresponding release of cytidine 5-monophosphate (CMP). The chain is 2-C-methyl-D-erythritol 2,4-cyclodiphosphate synthase from Pseudomonas entomophila (strain L48).